Reading from the N-terminus, the 258-residue chain is L-aminoadipate-semialdehyde dehydrogenase-phosphopantetheinyl transferase (258 aa).

The protein belongs to the P-Pant transferase superfamily. AcpS family.

Its subcellular location is the cytoplasm. The protein resides in the nucleus. It carries out the reaction apo-[ACP] + CoA = holo-[ACP] + adenosine 3',5'-bisphosphate + H(+). Functionally, catalyzes the transfer of a 4'-phosphopantetheine moiety from coenzyme A to a serine residue of acceptor proteins, such as alpha-aminoadipate reductase. Necessary for alpha-aminoadipate reductase activity. In Schizosaccharomyces pombe (strain 972 / ATCC 24843) (Fission yeast), this protein is L-aminoadipate-semialdehyde dehydrogenase-phosphopantetheinyl transferase (lys7).